A 109-amino-acid chain; its full sequence is Class I hydrophobin 18 (109 aa).

The N-terminal stretch at 1–20 (MFTEQVLNVIILLQTATVTA) is a signal peptide. Intrachain disulfides connect cysteine 28–cysteine 88, cysteine 35–cysteine 82, cysteine 36–cysteine 69, and cysteine 89–cysteine 102. N-linked (GlcNAc...) asparagine glycans are attached at residues asparagine 91 and asparagine 106.

This sequence belongs to the fungal hydrophobin family. Self-assembles to form functional amyloid fibrils called rodlets. Self-assembly into fibrillar rodlets occurs spontaneously at hydrophobic:hydrophilic interfaces and the rodlets further associate laterally to form amphipathic monolayers.

The protein resides in the secreted. It localises to the cell wall. Aerial growth, conidiation, and dispersal of filamentous fungi in the environment rely upon a capability of their secreting small amphipathic proteins called hydrophobins (HPBs) with low sequence identity. Class I can self-assemble into an outermost layer of rodlet bundles on aerial cell surfaces, conferring cellular hydrophobicity that supports fungal growth, development and dispersal; whereas Class II form highly ordered films at water-air interfaces through intermolecular interactions but contribute nothing to the rodlet structure. This is Class I hydrophobin 18 from Pleurotus ostreatus (strain PC15) (Oyster mushroom).